The primary structure comprises 260 residues: NH(3)-dependent NAD(+) synthetase (260 aa).

31–38 (GLSGGLDS) provides a ligand contact to ATP. Residue Asp-37 coordinates Mg(2+). Residue Arg-112 coordinates deamido-NAD(+). Thr-132 provides a ligand contact to ATP. Glu-137 lines the Mg(2+) pocket. ATP-binding residues include Lys-161 and Ser-183.

Belongs to the NAD synthetase family. Homodimer.

It catalyses the reaction deamido-NAD(+) + NH4(+) + ATP = AMP + diphosphate + NAD(+) + H(+). It functions in the pathway cofactor biosynthesis; NAD(+) biosynthesis; NAD(+) from deamido-NAD(+) (ammonia route): step 1/1. Its function is as follows. Catalyzes the ATP-dependent amidation of deamido-NAD to form NAD. Uses ammonia as a nitrogen source. The protein is NH(3)-dependent NAD(+) synthetase of Helicobacter pylori (strain ATCC 700392 / 26695) (Campylobacter pylori).